A 155-amino-acid polypeptide reads, in one-letter code: Altered inheritance rate of mitochondria protein 29 (155 aa).

Position 78 is a phosphoserine (Ser78).

The protein belongs to the UPF0538 family.

The protein resides in the cytoplasm. Its function is as follows. May be involved in mitochondrial organization and biogenesis. The protein is Altered inheritance rate of mitochondria protein 29 (AIM29) of Saccharomyces cerevisiae (strain ATCC 204508 / S288c) (Baker's yeast).